Consider the following 114-residue polypeptide: Cytochrome c2 (114 aa).

Residue Q1 is modified to Pyrrolidone carboxylic acid. 4 residues coordinate heme c: C13, C16, H17, and M93.

It belongs to the cytochrome c family. In terms of processing, binds 1 heme c group covalently per subunit.

The protein resides in the periplasm. Functionally, cytochrome c2 is found mainly in purple, non-sulfur, photosynthetic bacteria where it functions as the electron donor to the oxidized bacteriochlorophyll in the photophosphorylation pathway. However, it may also have a role in the respiratory chain and is found in some non-photosynthetic bacteria. The protein is Cytochrome c2 of Rhodopseudomonas palustris.